The following is a 468-amino-acid chain: Neuronal acetylcholine receptor subunit alpha-5 (468 aa).

The signal sequence occupies residues 1–22; that stretch reads MATRGSGPRAPRLLLLVQLVAG. Over 23–254 the chain is Extracellular; the sequence is RCGLAGAAGG…VIKRLPLFYT (232 aa). N-linked (GlcNAc...) asparagine glycans are attached at residues asparagine 155, asparagine 183, and asparagine 229. Cysteine 170 and cysteine 184 are joined by a disulfide. Residues cysteine 234 and cysteine 235 are joined by a disulfide bond. The next 3 membrane-spanning stretches (helical) occupy residues 255–275, 282–302, and 317–337; these read LFLIIPCIGLSFLTVLVFYLP, ICLCTSVLVSLTVFLLVIEEI, and LVFTMIFVTLSIMVTVFAINI. The Cytoplasmic segment spans residues 338-429; it reads HHRSSSTHNA…WKFIAQVLDR (92 aa). A helical transmembrane segment spans residues 430–451; sequence MFLWTFLFVSIVGSLGLFVPVI. Topologically, residues 452–468 are extracellular; that stretch reads YKWANILIPVHIGNANK.

This sequence belongs to the ligand-gated ion channel (TC 1.A.9) family. Acetylcholine receptor (TC 1.A.9.1) subfamily. Alpha-5/CHRNA5 sub-subfamily. As to quaternary structure, neuronal AChR that forms heteropentamers composed of two different type of subunits: alpha and non-alpha (beta). CHRNA5/alpha-5 subunit is only able to form functional nAChRs when co-assembled with another alpha subunit, can be combined to CHRNA4/alpha-4 or CHRNA3/alpha-3 and CHRNB4/beta-4 or CHRNB2/beta-2 to give rise to functional receptors. Interacts with LYPD6.

The protein resides in the synaptic cell membrane. It localises to the cell membrane. The catalysed reaction is Ca(2+)(in) = Ca(2+)(out). It catalyses the reaction K(+)(in) = K(+)(out). It carries out the reaction Na(+)(in) = Na(+)(out). Its activity is regulated as follows. Activated by a myriad of ligands such as acetylcholine, cytisine, nicotine, choline and epibatidine. Functionally, component of neuronal acetylcholine receptors (nAChRs) that function as pentameric, ligand-gated cation channels with high calcium permeability among other activities. nAChRs are excitatory neurotrasnmitter receptors formed by a collection of nAChR subunits known to mediate synaptic transmission in the nervous system and the neuromuscular junction. Each nAchR subunit confers differential attributes to channel properties, including activation, deactivation and desensitization kinetics, pH sensitivity, cation permeability, and binding to allosteric modulators. Has an accessory rather than functional role and is only able to form functional nAChRs when co-assembled with another beta subunit. Participates in pentameric assemblies along with CHRNA3, CHRNA4, CHRNB2 and CHRNB4. Increases receptor sensitivity to acetylcholine and nicotine when associated with CHRNA4 and CHRNB2. Plays a role in nicotine addiction. The polypeptide is Neuronal acetylcholine receptor subunit alpha-5 (CHRNA5) (Pan troglodytes (Chimpanzee)).